Here is a 196-residue protein sequence, read N- to C-terminus: dCTP deaminase, dUMP-forming (196 aa).

Residues 101-106, Asp-119, 127-129, Gln-148, Tyr-162, and Gln-174 each bind dCTP; these read KSSLGR and TLE. Glu-129 serves as the catalytic Proton donor/acceptor.

It belongs to the dCTP deaminase family. Homotrimer.

It carries out the reaction dCTP + 2 H2O = dUMP + NH4(+) + diphosphate. Its pathway is pyrimidine metabolism; dUMP biosynthesis; dUMP from dCTP: step 1/1. Bifunctional enzyme that catalyzes both the deamination of dCTP to dUTP and the hydrolysis of dUTP to dUMP without releasing the toxic dUTP intermediate. The protein is dCTP deaminase, dUMP-forming of Tropheryma whipplei (strain TW08/27) (Whipple's bacillus).